A 126-amino-acid polypeptide reads, in one-letter code: MSGRGKGAGKARAKAKSRSARAGLQFPVGRVHRFLRKGNYAQRVGAGAPVYLAAVLEYLAAEILELAGNAARDNKKTRIIPRHLQLAVRNDEELNKLLSGVTIAQGGVLPNIQAVLLPKKTSKASK.

The disordered stretch occupies residues 1 to 20 (MSGRGKGAGKARAKAKSRSA). The residue at position 2 (Ser-2) is an N-acetylserine. Ser-2 is modified (phosphoserine). A compositionally biased stretch (basic residues) spans 7–19 (GAGKARAKAKSRS). At Gln-105 the chain carries N5-methylglutamine. Lys-120 is covalently cross-linked (Glycyl lysine isopeptide (Lys-Gly) (interchain with G-Cter in ubiquitin)).

The protein belongs to the histone H2A family. In terms of assembly, the nucleosome is a histone octamer containing two molecules each of H2A, H2B, H3 and H4 assembled in one H3-H4 heterotetramer and two H2A-H2B heterodimers. The octamer wraps approximately 147 bp of DNA. Post-translationally, monoubiquitination of Lys-120 gives a specific tag for epigenetic transcriptional repression. Phosphorylation of Ser-2 directly represses transcription.

The protein resides in the nucleus. The protein localises to the chromosome. Functionally, core component of nucleosome. Nucleosomes wrap and compact DNA into chromatin, limiting DNA accessibility to the cellular machineries which require DNA as a template. Histones thereby play a central role in transcription regulation, DNA repair, DNA replication and chromosomal stability. DNA accessibility is regulated via a complex set of post-translational modifications of histones, also called histone code, and nucleosome remodeling. The polypeptide is Late histone H2A.L3 (Strongylocentrotus purpuratus (Purple sea urchin)).